A 410-amino-acid polypeptide reads, in one-letter code: Arginine deiminase (410 aa).

Catalysis depends on Cys400, which acts as the Amidino-cysteine intermediate.

The protein belongs to the arginine deiminase family.

The protein resides in the cytoplasm. It carries out the reaction L-arginine + H2O = L-citrulline + NH4(+). It functions in the pathway amino-acid degradation; L-arginine degradation via ADI pathway; carbamoyl phosphate from L-arginine: step 1/2. The chain is Arginine deiminase from Lactococcus lactis subsp. cremoris (strain MG1363).